Consider the following 530-residue polypeptide: Synembryn-like chaperone C3E7.04c (530 aa).

The helical transmembrane segment at 492–512 (SFIYHCYHSFVGPIHILLLMF) threads the bilayer.

It belongs to the synembryn family.

Its subcellular location is the membrane. Functionally, chaperone that specifically binds and folds some, but not all, nascent G alpha proteins prior to G protein heterotrimer formation, promoting their stability and activity. Also acts as a guanine nucleotide exchange factor (GEF) for G alpha proteins by stimulating exchange of bound GDP for free GTP. The polypeptide is Synembryn-like chaperone C3E7.04c (Schizosaccharomyces pombe (strain 972 / ATCC 24843) (Fission yeast)).